The sequence spans 308 residues: MGHLTPVAAPRLACAFVPTNAQRRATAKRKLERQLERRAKQAKRRRILTIVGGSLAAVAVIVAVVVTVVVNKDDHQSTTSATPTDSASTSPPQAATAPPLPPFKPSANLGANCQYPPSPDKAVKPVKLPRTGKVPTDPAQVSVSMVTNQGNIGLMLANNESPCTVNSFVSLAQQGFFKGTTCHRLTTSPMLAVLQCGDPKGDGTGGPGYQFANEYPTDQYSANDPKLNEPVIYPRGTLAMANAGPNTNSSQFFMVYRDSKLPPQYTVFGTIQADGLTTLDKIAKAGVAGGGEDGKPATEVTITSVLLD.

The interval 74–123 (DHQSTTSATPTDSASTSPPQAATAPPLPPFKPSANLGANCQYPPSPDKAV) is disordered. A compositionally biased stretch (low complexity) spans 77–97 (STTSATPTDSASTSPPQAATA). In terms of domain architecture, PPIase cyclophilin-type spans 139-307 (AQVSVSMVTN…TEVTITSVLL (169 aa)).

It belongs to the cyclophilin-type PPIase family.

The catalysed reaction is [protein]-peptidylproline (omega=180) = [protein]-peptidylproline (omega=0). In terms of biological role, PPIases accelerate the folding of proteins. It catalyzes the cis-trans isomerization of proline imidic peptide bonds in oligopeptides. The polypeptide is Probable peptidyl-prolyl cis-trans isomerase B (ppiB) (Mycobacterium tuberculosis (strain CDC 1551 / Oshkosh)).